A 500-amino-acid chain; its full sequence is Na(+)/H(+) antiporter NhaB (500 aa).

Transmembrane regions (helical) follow at residues 34–54 (LLLA…QFIF), 58–78 (MALK…ALLL), 96–116 (VILL…LLLF), 129–149 (AVLS…LDAL), 150–170 (TVTA…HRVA), 205–225 (LLMH…VGEP), 241–261 (FFLK…VTCV), 311–331 (ILIV…LMVI), 350–370 (FQDA…VAVI), 394–414 (MLYL…VATI), 450–470 (ATPN…APLI), and 477–497 (MVWM…WAVT).

This sequence belongs to the NhaB Na(+)/H(+) (TC 2.A.34) antiporter family.

It is found in the cell inner membrane. It catalyses the reaction 2 Na(+)(in) + 3 H(+)(out) = 2 Na(+)(out) + 3 H(+)(in). Its function is as follows. Na(+)/H(+) antiporter that extrudes sodium in exchange for external protons. This chain is Na(+)/H(+) antiporter NhaB, found in Pseudomonas entomophila (strain L48).